A 473-amino-acid chain; its full sequence is Adhesive plaque matrix protein 2 (473 aa).

The N-terminal stretch at Met-1 to Gly-17 is a signal peptide. 4 positions are modified to 3',4'-dihydroxyphenylalanine: Tyr-23, Tyr-31, Tyr-36, and Tyr-43. EGF-like domains lie at Pro-45–Asn-81, Leu-82–Cys-117, Glu-118–Cys-154, Glu-155–Cys-191, Gln-192–Cys-228, Glu-229–Cys-265, Lys-266–Cys-301, Gly-302–Glu-340, Lys-342–Thr-378, Lys-383–Thr-420, and Lys-425–Ser-461. 33 disulfide bridges follow: Cys-49–Cys-60, Cys-54–Cys-69, Cys-71–Cys-80, Cys-86–Cys-97, Cys-91–Cys-106, Cys-108–Cys-117, Cys-122–Cys-133, Cys-127–Cys-143, Cys-145–Cys-154, Cys-159–Cys-170, Cys-164–Cys-180, Cys-182–Cys-191, Cys-196–Cys-207, Cys-201–Cys-217, Cys-219–Cys-228, Cys-233–Cys-244, Cys-238–Cys-254, Cys-256–Cys-265, Cys-270–Cys-281, Cys-275–Cys-290, Cys-292–Cys-301, Cys-306–Cys-317, Cys-311–Cys-328, Cys-330–Cys-339, Cys-346–Cys-357, Cys-351–Cys-366, Cys-368–Cys-377, Cys-387–Cys-399, Cys-393–Cys-408, Cys-410–Cys-419, Cys-429–Cys-440, Cys-434–Cys-449, and Cys-451–Cys-460. A glycan (N-linked (GlcNAc...) asparagine) is linked at Asn-93.

Contains L-DOPA (3',4'-dihydroxyphenylalanine). As to expression, produced by the byssal gland.

Its subcellular location is the secreted. Functionally, provides adhesiveness to the mussel's foot. Mussels produce one of the strongest water insoluble glues. The mussel's adhesive is a bundle of threads, called a byssus, formed by a fibrous collagenous core coated with adhesive proteins. The chain is Adhesive plaque matrix protein 2 (FP2) from Mytilus galloprovincialis (Mediterranean mussel).